A 235-amino-acid chain; its full sequence is 2-C-methyl-D-erythritol 4-phosphate cytidylyltransferase (235 aa).

Belongs to the IspD/TarI cytidylyltransferase family. IspD subfamily.

The catalysed reaction is 2-C-methyl-D-erythritol 4-phosphate + CTP + H(+) = 4-CDP-2-C-methyl-D-erythritol + diphosphate. It functions in the pathway isoprenoid biosynthesis; isopentenyl diphosphate biosynthesis via DXP pathway; isopentenyl diphosphate from 1-deoxy-D-xylulose 5-phosphate: step 2/6. Its function is as follows. Catalyzes the formation of 4-diphosphocytidyl-2-C-methyl-D-erythritol from CTP and 2-C-methyl-D-erythritol 4-phosphate (MEP). The sequence is that of 2-C-methyl-D-erythritol 4-phosphate cytidylyltransferase from Pseudomonas fluorescens (strain ATCC BAA-477 / NRRL B-23932 / Pf-5).